Here is a 507-residue protein sequence, read N- to C-terminus: ATP synthase subunit alpha, chloroplastic (507 aa).

170-177 (GDRQTGKT) provides a ligand contact to ATP.

Belongs to the ATPase alpha/beta chains family. In terms of assembly, F-type ATPases have 2 components, CF(1) - the catalytic core - and CF(0) - the membrane proton channel. CF(1) has five subunits: alpha(3), beta(3), gamma(1), delta(1), epsilon(1). CF(0) has four main subunits: a, b, b' and c.

The protein resides in the plastid. It localises to the chloroplast thylakoid membrane. The enzyme catalyses ATP + H2O + 4 H(+)(in) = ADP + phosphate + 5 H(+)(out). In terms of biological role, produces ATP from ADP in the presence of a proton gradient across the membrane. The alpha chain is a regulatory subunit. The chain is ATP synthase subunit alpha, chloroplastic from Populus alba (White poplar).